A 387-amino-acid polypeptide reads, in one-letter code: Phosphoglycerate kinase (387 aa).

Substrate contacts are provided by residues 21-23 (DLN), R36, 59-62 (HLGR), R113, and R146. Residues K197, E314, and 340–343 (GGDT) each bind ATP.

It belongs to the phosphoglycerate kinase family. Monomer.

It is found in the cytoplasm. It carries out the reaction (2R)-3-phosphoglycerate + ATP = (2R)-3-phospho-glyceroyl phosphate + ADP. The protein operates within carbohydrate degradation; glycolysis; pyruvate from D-glyceraldehyde 3-phosphate: step 2/5. This chain is Phosphoglycerate kinase, found in Tolumonas auensis (strain DSM 9187 / NBRC 110442 / TA 4).